The primary structure comprises 70 residues: Cold shock-like protein CspJ (70 aa).

The 61-residue stretch at 7–67 (GLVKWFNPEK…GPKGPSAVNV (61 aa)) folds into the CSD domain.

The protein localises to the cytoplasm. The protein is Cold shock-like protein CspJ (cspJ) of Salmonella typhimurium (strain SL1344).